The sequence spans 131 residues: Large ribosomal subunit protein bL12 (131 aa).

The segment covering 99–125 (ESTPKPIKEGTNKDDAEETKKKLEEAG) has biased composition (basic and acidic residues). The interval 99 to 131 (ESTPKPIKEGTNKDDAEETKKKLEEAGAKVTVK) is disordered.

The protein belongs to the bacterial ribosomal protein bL12 family. As to quaternary structure, homodimer. Part of the ribosomal stalk of the 50S ribosomal subunit. Forms a multimeric L10(L12)X complex, where L10 forms an elongated spine to which 2 to 4 L12 dimers bind in a sequential fashion. Binds GTP-bound translation factors.

Forms part of the ribosomal stalk which helps the ribosome interact with GTP-bound translation factors. Is thus essential for accurate translation. This chain is Large ribosomal subunit protein bL12, found in Gloeothece citriformis (strain PCC 7424) (Cyanothece sp. (strain PCC 7424)).